Reading from the N-terminus, the 433-residue chain is Glutamate-1-semialdehyde 2,1-aminomutase (433 aa).

N6-(pyridoxal phosphate)lysine is present on Lys269.

This sequence belongs to the class-III pyridoxal-phosphate-dependent aminotransferase family. HemL subfamily. As to quaternary structure, homodimer. The cofactor is pyridoxal 5'-phosphate.

The protein resides in the cytoplasm. It catalyses the reaction (S)-4-amino-5-oxopentanoate = 5-aminolevulinate. It participates in porphyrin-containing compound metabolism; protoporphyrin-IX biosynthesis; 5-aminolevulinate from L-glutamyl-tRNA(Glu): step 2/2. This is Glutamate-1-semialdehyde 2,1-aminomutase from Francisella philomiragia subsp. philomiragia (strain ATCC 25017 / CCUG 19701 / FSC 153 / O#319-036).